The chain runs to 165 residues: Large ribosomal subunit protein uL10 (165 aa).

Belongs to the universal ribosomal protein uL10 family. As to quaternary structure, part of the ribosomal stalk of the 50S ribosomal subunit. The N-terminus interacts with L11 and the large rRNA to form the base of the stalk. The C-terminus forms an elongated spine to which L12 dimers bind in a sequential fashion forming a multimeric L10(L12)X complex.

Functionally, forms part of the ribosomal stalk, playing a central role in the interaction of the ribosome with GTP-bound translation factors. This chain is Large ribosomal subunit protein uL10, found in Dechloromonas aromatica (strain RCB).